Consider the following 182-residue polypeptide: Probable RNA 2'-phosphotransferase (182 aa).

It belongs to the KptA/TPT1 family.

In terms of biological role, removes the 2'-phosphate from RNA via an intermediate in which the phosphate is ADP-ribosylated by NAD followed by a presumed transesterification to release the RNA and generate ADP-ribose 1''-2''-cyclic phosphate (APPR&gt;P). May function as an ADP-ribosylase. This Pseudomonas fluorescens (strain ATCC BAA-477 / NRRL B-23932 / Pf-5) protein is Probable RNA 2'-phosphotransferase.